The primary structure comprises 459 residues: Cysteine--tRNA ligase (459 aa).

Cys-28 contacts Zn(2+). The 'HIGH' region motif lies at 30-40 (VTIYDLCHIGH). Zn(2+) contacts are provided by Cys-209, His-234, and Glu-238. The short motif at 266-270 (KMSKS) is the 'KMSKS' region element. Lys-269 provides a ligand contact to ATP.

The protein belongs to the class-I aminoacyl-tRNA synthetase family. Monomer. Zn(2+) serves as cofactor.

Its subcellular location is the cytoplasm. It carries out the reaction tRNA(Cys) + L-cysteine + ATP = L-cysteinyl-tRNA(Cys) + AMP + diphosphate. The chain is Cysteine--tRNA ligase from Shewanella baltica (strain OS223).